A 187-amino-acid chain; its full sequence is Peptidyl-tRNA hydrolase (187 aa).

Tyr18 contacts tRNA. His23 functions as the Proton acceptor in the catalytic mechanism. Positions 65, 67, and 113 each coordinate tRNA.

Belongs to the PTH family. In terms of assembly, monomer.

Its subcellular location is the cytoplasm. It carries out the reaction an N-acyl-L-alpha-aminoacyl-tRNA + H2O = an N-acyl-L-amino acid + a tRNA + H(+). Functionally, hydrolyzes ribosome-free peptidyl-tRNAs (with 1 or more amino acids incorporated), which drop off the ribosome during protein synthesis, or as a result of ribosome stalling. In terms of biological role, catalyzes the release of premature peptidyl moieties from peptidyl-tRNA molecules trapped in stalled 50S ribosomal subunits, and thus maintains levels of free tRNAs and 50S ribosomes. This Coxiella burnetii (strain CbuG_Q212) (Coxiella burnetii (strain Q212)) protein is Peptidyl-tRNA hydrolase.